A 264-amino-acid polypeptide reads, in one-letter code: 2-C-methyl-D-erythritol 4-phosphate cytidylyltransferase (264 aa).

Residues 234 to 264 (ARDPESAHPQSSVLASAFSGPGSRVSGPEEI) are disordered.

It belongs to the IspD/TarI cytidylyltransferase family. IspD subfamily.

The catalysed reaction is 2-C-methyl-D-erythritol 4-phosphate + CTP + H(+) = 4-CDP-2-C-methyl-D-erythritol + diphosphate. It functions in the pathway isoprenoid biosynthesis; isopentenyl diphosphate biosynthesis via DXP pathway; isopentenyl diphosphate from 1-deoxy-D-xylulose 5-phosphate: step 2/6. Functionally, catalyzes the formation of 4-diphosphocytidyl-2-C-methyl-D-erythritol from CTP and 2-C-methyl-D-erythritol 4-phosphate (MEP). The protein is 2-C-methyl-D-erythritol 4-phosphate cytidylyltransferase of Xanthomonas euvesicatoria pv. vesicatoria (strain 85-10) (Xanthomonas campestris pv. vesicatoria).